A 102-amino-acid chain; its full sequence is Glutaredoxin-C14 (102 aa).

Residues 1 to 101 form the Glutaredoxin domain; it reads MDKVMRMSSE…PLIKPYQSFH (101 aa). C21 and C24 form a disulfide bridge.

It belongs to the glutaredoxin family. CC-type subfamily.

It is found in the cytoplasm. Its function is as follows. Has a glutathione-disulfide oxidoreductase activity in the presence of NADPH and glutathione reductase. Reduces low molecular weight disulfides and proteins. The protein is Glutaredoxin-C14 (GRXC14) of Arabidopsis thaliana (Mouse-ear cress).